The following is a 363-amino-acid chain: NAD(P)H-quinone oxidoreductase subunit 1, chloroplastic (363 aa).

Transmembrane regions (helical) follow at residues 27 to 47 (LIPI…IVWL), 93 to 113 (WLFS…YLVV), 124 to 144 (LGVG…GLLM), 162 to 182 (AAQA…VALL), 200 to 220 (ILGW…IASL), 250 to 270 (FGLF…FVSV), 303 to 323 (ATLG…LSIL), and 343 to 363 (FLLP…LALL).

This sequence belongs to the complex I subunit 1 family. In terms of assembly, NDH is composed of at least 16 different subunits, 5 of which are encoded in the nucleus.

It is found in the plastid. It localises to the chloroplast thylakoid membrane. It carries out the reaction a plastoquinone + NADH + (n+1) H(+)(in) = a plastoquinol + NAD(+) + n H(+)(out). The enzyme catalyses a plastoquinone + NADPH + (n+1) H(+)(in) = a plastoquinol + NADP(+) + n H(+)(out). NDH shuttles electrons from NAD(P)H:plastoquinone, via FMN and iron-sulfur (Fe-S) centers, to quinones in the photosynthetic chain and possibly in a chloroplast respiratory chain. The immediate electron acceptor for the enzyme in this species is believed to be plastoquinone. Couples the redox reaction to proton translocation, and thus conserves the redox energy in a proton gradient. In Chaetosphaeridium globosum (Charophycean green alga), this protein is NAD(P)H-quinone oxidoreductase subunit 1, chloroplastic.